Reading from the N-terminus, the 364-residue chain is Chaperone protein DnaJ 1 (364 aa).

Positions 7 to 71 (DYYEILGVNR…ERRSEYDAIL (65 aa)) constitute a J domain. The CR-type zinc finger occupies 124–200 (GCEKEIIYSR…CYGRGRVSAQ (77 aa)). Residues C137, C140, C154, C157, C174, C177, C188, and C191 each contribute to the Zn(2+) site. 4 CXXCXGXG motif repeats span residues 137–144 (CPVCEGMG), 154–161 (CHACNGEG), 174–181 (CSVCKGKG), and 188–195 (CPTCYGRG).

It belongs to the DnaJ family. As to quaternary structure, homodimer. The cofactor is Zn(2+).

Its subcellular location is the cytoplasm. Participates actively in the response to hyperosmotic and heat shock by preventing the aggregation of stress-denatured proteins and by disaggregating proteins, also in an autonomous, DnaK-independent fashion. Unfolded proteins bind initially to DnaJ; upon interaction with the DnaJ-bound protein, DnaK hydrolyzes its bound ATP, resulting in the formation of a stable complex. GrpE releases ADP from DnaK; ATP binding to DnaK triggers the release of the substrate protein, thus completing the reaction cycle. Several rounds of ATP-dependent interactions between DnaJ, DnaK and GrpE are required for fully efficient folding. Also involved, together with DnaK and GrpE, in the DNA replication of plasmids through activation of initiation proteins. This Aquifex aeolicus (strain VF5) protein is Chaperone protein DnaJ 1.